The chain runs to 106 residues: Molt-inhibiting hormone (106 aa).

The signal sequence occupies residues 1–29 (MVNQVAQCFTVRRVWLVVVVGLLVHQTTA). Cystine bridges form between C36–C73, C53–C69, and C56–C82. A104 is modified (alanine amide). A propeptide spanning residues 105–106 (GR) is cleaved from the precursor.

Sinus gland of the eyestalk.

The protein resides in the secreted. Functionally, inhibits Y-organs where molting hormone (ecdysteroid) is secreted. A molting cycle is initiated when MIH secretion diminishes or stops. This Faxonius limosus (Spinycheek crayfish) protein is Molt-inhibiting hormone.